A 157-amino-acid polypeptide reads, in one-letter code: MHILGIDPGSRKCGYAIISYASNKLSLITAGFINITTTHLQEQILDLIEALDCLLDRYEVHEVAIEDIFFGYNPKSVIKLAQFRGALSLKILERVGNFSEYTPLQVKKALTGNGKAAKEQVAFMVKRLLHITSEIKPLDISDAIAVAIMHAQRLKLY.

Residues D7, E66, and D139 contribute to the active site. The Mg(2+) site is built by D7, E66, and D139.

The protein belongs to the RuvC family. As to quaternary structure, homodimer which binds Holliday junction (HJ) DNA. The HJ becomes 2-fold symmetrical on binding to RuvC with unstacked arms; it has a different conformation from HJ DNA in complex with RuvA. In the full resolvosome a probable DNA-RuvA(4)-RuvB(12)-RuvC(2) complex forms which resolves the HJ. Mg(2+) serves as cofactor.

Its subcellular location is the cytoplasm. The enzyme catalyses Endonucleolytic cleavage at a junction such as a reciprocal single-stranded crossover between two homologous DNA duplexes (Holliday junction).. Functionally, the RuvA-RuvB-RuvC complex processes Holliday junction (HJ) DNA during genetic recombination and DNA repair. Endonuclease that resolves HJ intermediates. Cleaves cruciform DNA by making single-stranded nicks across the HJ at symmetrical positions within the homologous arms, yielding a 5'-phosphate and a 3'-hydroxyl group; requires a central core of homology in the junction. The consensus cleavage sequence is 5'-(A/T)TT(C/G)-3'. Cleavage occurs on the 3'-side of the TT dinucleotide at the point of strand exchange. HJ branch migration catalyzed by RuvA-RuvB allows RuvC to scan DNA until it finds its consensus sequence, where it cleaves and resolves the cruciform DNA. The polypeptide is Crossover junction endodeoxyribonuclease RuvC (Helicobacter acinonychis (strain Sheeba)).